The chain runs to 48 residues: M-oxotoxin-Ot1a (48 aa).

As to expression, expressed by the venom gland.

The protein resides in the secreted. Its subcellular location is the target cell membrane. Disrupts cell membranes, particularly those rich in phosphocholine, through formation of pores. Has antimicrobial activity against Gram-negative bacterium E.coli, Gram-positive bacteria B.subtilis and S.aureus, and hemolytic activity against sheep, pig and guinea pig erythrocytes. Has insecticidal activity against S.frugiperda ovarian cells by opening non-selective ion channels. Enhances the insecticidal activity of spider venom neurotoxic peptides. This Oxyopes takobius (Lynx spider) protein is M-oxotoxin-Ot1a.